The chain runs to 196 residues: Imidazole glycerol phosphate synthase subunit HisH (196 aa).

A Glutamine amidotransferase type-1 domain is found at 2-196; sequence DVVILDTGCA…AQLMKNFLEM (195 aa). Catalysis depends on cysteine 77, which acts as the Nucleophile. Residues histidine 178 and glutamate 180 contribute to the active site.

Heterodimer of HisH and HisF.

Its subcellular location is the cytoplasm. It carries out the reaction 5-[(5-phospho-1-deoxy-D-ribulos-1-ylimino)methylamino]-1-(5-phospho-beta-D-ribosyl)imidazole-4-carboxamide + L-glutamine = D-erythro-1-(imidazol-4-yl)glycerol 3-phosphate + 5-amino-1-(5-phospho-beta-D-ribosyl)imidazole-4-carboxamide + L-glutamate + H(+). The enzyme catalyses L-glutamine + H2O = L-glutamate + NH4(+). It participates in amino-acid biosynthesis; L-histidine biosynthesis; L-histidine from 5-phospho-alpha-D-ribose 1-diphosphate: step 5/9. Its function is as follows. IGPS catalyzes the conversion of PRFAR and glutamine to IGP, AICAR and glutamate. The HisH subunit catalyzes the hydrolysis of glutamine to glutamate and ammonia as part of the synthesis of IGP and AICAR. The resulting ammonia molecule is channeled to the active site of HisF. The chain is Imidazole glycerol phosphate synthase subunit HisH from Yersinia pestis.